A 701-amino-acid chain; its full sequence is Glycine--tRNA ligase beta subunit (701 aa).

The protein belongs to the class-II aminoacyl-tRNA synthetase family. Tetramer of two alpha and two beta subunits.

The protein localises to the cytoplasm. The catalysed reaction is tRNA(Gly) + glycine + ATP = glycyl-tRNA(Gly) + AMP + diphosphate. In Anaeromyxobacter dehalogenans (strain 2CP-C), this protein is Glycine--tRNA ligase beta subunit.